A 221-amino-acid polypeptide reads, in one-letter code: 7-cyano-7-deazaguanine synthase (221 aa).

Residue 7–17 (LSGGMDSSTLA) participates in ATP binding. Residues Cys-187, Cys-195, Cys-198, and Cys-201 each coordinate Zn(2+).

This sequence belongs to the QueC family. Zn(2+) is required as a cofactor.

The enzyme catalyses 7-carboxy-7-deazaguanine + NH4(+) + ATP = 7-cyano-7-deazaguanine + ADP + phosphate + H2O + H(+). Its pathway is purine metabolism; 7-cyano-7-deazaguanine biosynthesis. In terms of biological role, catalyzes the ATP-dependent conversion of 7-carboxy-7-deazaguanine (CDG) to 7-cyano-7-deazaguanine (preQ(0)). The polypeptide is 7-cyano-7-deazaguanine synthase (Methanosphaerula palustris (strain ATCC BAA-1556 / DSM 19958 / E1-9c)).